A 549-amino-acid chain; its full sequence is Glucose-6-phosphate isomerase (549 aa).

Catalysis depends on Glu-353, which acts as the Proton donor. Residues His-384 and Lys-513 contribute to the active site.

The protein belongs to the GPI family.

Its subcellular location is the cytoplasm. It catalyses the reaction alpha-D-glucose 6-phosphate = beta-D-fructose 6-phosphate. It participates in carbohydrate biosynthesis; gluconeogenesis. It functions in the pathway carbohydrate degradation; glycolysis; D-glyceraldehyde 3-phosphate and glycerone phosphate from D-glucose: step 2/4. In terms of biological role, catalyzes the reversible isomerization of glucose-6-phosphate to fructose-6-phosphate. This Brucella suis (strain ATCC 23445 / NCTC 10510) protein is Glucose-6-phosphate isomerase.